Consider the following 89-residue polypeptide: Small ribosomal subunit protein uS15 (89 aa).

The segment covering 1–11 (MSIAAERKAEV) has biased composition (basic and acidic residues). Residues 1 to 25 (MSIAAERKAEVIKTSANKPGDTGSP) form a disordered region.

Belongs to the universal ribosomal protein uS15 family. Part of the 30S ribosomal subunit. Forms a bridge to the 50S subunit in the 70S ribosome, contacting the 23S rRNA.

One of the primary rRNA binding proteins, it binds directly to 16S rRNA where it helps nucleate assembly of the platform of the 30S subunit by binding and bridging several RNA helices of the 16S rRNA. Functionally, forms an intersubunit bridge (bridge B4) with the 23S rRNA of the 50S subunit in the ribosome. The chain is Small ribosomal subunit protein uS15 from Nitrobacter winogradskyi (strain ATCC 25391 / DSM 10237 / CIP 104748 / NCIMB 11846 / Nb-255).